The sequence spans 274 residues: Formamidopyrimidine-DNA glycosylase (274 aa).

The active-site Schiff-base intermediate with DNA is the P2. The active-site Proton donor is the E3. K57 functions as the Proton donor; for beta-elimination activity in the catalytic mechanism. DNA contacts are provided by H92, R111, and K152. The FPG-type zinc finger occupies 237-271 (QVYGRKGEECNDCGSIIEAKVIGQRNSFYCPKCQR). R261 acts as the Proton donor; for delta-elimination activity in catalysis.

Belongs to the FPG family. As to quaternary structure, monomer. The cofactor is Zn(2+).

The enzyme catalyses Hydrolysis of DNA containing ring-opened 7-methylguanine residues, releasing 2,6-diamino-4-hydroxy-5-(N-methyl)formamidopyrimidine.. It catalyses the reaction 2'-deoxyribonucleotide-(2'-deoxyribose 5'-phosphate)-2'-deoxyribonucleotide-DNA = a 3'-end 2'-deoxyribonucleotide-(2,3-dehydro-2,3-deoxyribose 5'-phosphate)-DNA + a 5'-end 5'-phospho-2'-deoxyribonucleoside-DNA + H(+). In terms of biological role, involved in base excision repair of DNA damaged by oxidation or by mutagenic agents. Acts as a DNA glycosylase that recognizes and removes damaged bases. Has a preference for oxidized purines, such as 7,8-dihydro-8-oxoguanine (8-oxoG). Has AP (apurinic/apyrimidinic) lyase activity and introduces nicks in the DNA strand. Cleaves the DNA backbone by beta-delta elimination to generate a single-strand break at the site of the removed base with both 3'- and 5'-phosphates. This chain is Formamidopyrimidine-DNA glycosylase, found in Glaesserella parasuis serovar 5 (strain SH0165) (Haemophilus parasuis).